Reading from the N-terminus, the 110-residue chain is Prothymosin alpha (110 aa).

An N-acetylmethionine modification is found at Met-1. The tract at residues 1–110 (MSDAAVDTSS…TKKQKTDEDD (110 aa)) is disordered. An N-acetylserine; in Prothymosin alpha, N-terminally processed modification is found at Ser-2. Ser-2 carries the post-translational modification Phosphoserine. Thr-8 carries the post-translational modification Phosphothreonine. Phosphoserine is present on residues Ser-9 and Ser-10. 2 positions are modified to phosphothreonine: Thr-13 and Thr-14. Basic and acidic residues predominate over residues 13–31 (TTKDLKEKKEVVEEAENGR). Residue Lys-15 is modified to N6-acetyllysine; alternate. Lys-15 carries the post-translational modification N6-succinyllysine; alternate. Residues 42-83 (ENGEQEADNEVDEEEEEGGEEEEEEEEGDGEEEDGDEDEEAE) are compositionally biased toward acidic residues. Over residues 100–110 (DTKKQKTDEDD) the composition is skewed to basic and acidic residues. Position 101 is a phosphothreonine (Thr-101). Residue Lys-102 is modified to N6-acetyllysine; alternate. Residue Lys-102 forms a Glycyl lysine isopeptide (Lys-Gly) (interchain with G-Cter in SUMO2); alternate linkage. Thr-106 carries the phosphothreonine modification.

Belongs to the pro/parathymosin family. Interacts with NUPR1; regulates apoptotic process. Covalently linked to a small RNA of about 20 nucleotides.

The protein resides in the nucleus. Functionally, prothymosin alpha may mediate immune function by conferring resistance to certain opportunistic infections. The polypeptide is Prothymosin alpha (PTMA) (Pongo abelii (Sumatran orangutan)).